The primary structure comprises 218 residues: Small ribosomal subunit protein uS3c (218 aa).

The region spanning 47–118 (VRKHIKSSSN…KLRMALTEVE (72 aa)) is the KH type-2 domain.

It belongs to the universal ribosomal protein uS3 family. In terms of assembly, part of the 30S ribosomal subunit.

The protein localises to the plastid. It localises to the chloroplast. The chain is Small ribosomal subunit protein uS3c (rps3) from Anthoceros angustus (Hornwort).